We begin with the raw amino-acid sequence, 261 residues long: Cytochrome c oxidase subunit 3 (261 aa).

The Mitochondrial matrix portion of the chain corresponds to 1–15; sequence MTNQLHPFHMTNPSP. Residues 16-34 traverse the membrane as a helical segment; the sequence is WPLTGATAALLMTSGLIMW. At 35–40 the chain is on the mitochondrial intermembrane side; the sequence is FHYNSS. Residues 41–66 form a helical membrane-spanning segment; the sequence is QLIMLGLLIMLLTLTQWWRDIVREST. The Mitochondrial matrix portion of the chain corresponds to 67-72; that stretch reads FQGHHT. A helical membrane pass occupies residues 73-105; it reads PSVQNNLRYGMILFITSEILFFTGFFWAFYHSS. At 106 to 128 the chain is on the mitochondrial intermembrane side; sequence LSPTAELGNIWPPTGITPLNPFE. The chain crosses the membrane as a helical span at residues 129 to 152; it reads VPLLNTAVLLASGVTITWAHHSLM. Residues 153–155 lie on the Mitochondrial matrix side of the membrane; it reads EGN. Residues 156-183 traverse the membrane as a helical segment; that stretch reads RPQTLQALTLTIILGTYFTILQAMEYFE. The Mitochondrial intermembrane segment spans residues 184-190; it reads ASFTIAD. A helical transmembrane segment spans residues 191-223; it reads SIYGSTFFVATGFHGLHVIIGSTFLIVCLMRQL. Residues 224 to 232 are Mitochondrial matrix-facing; sequence KYHFTSHHH. Residues 233-256 form a helical membrane-spanning segment; it reads FGFEAAAWYWHFVDVIWLFLYLSI. At 257–261 the chain is on the mitochondrial intermembrane side; sequence YWWGS.

It belongs to the cytochrome c oxidase subunit 3 family. As to quaternary structure, component of the cytochrome c oxidase (complex IV, CIV), a multisubunit enzyme composed of 14 subunits. The complex is composed of a catalytic core of 3 subunits MT-CO1, MT-CO2 and MT-CO3, encoded in the mitochondrial DNA, and 11 supernumerary subunits COX4I, COX5A, COX5B, COX6A, COX6B, COX6C, COX7A, COX7B, COX7C, COX8 and NDUFA4, which are encoded in the nuclear genome. The complex exists as a monomer or a dimer and forms supercomplexes (SCs) in the inner mitochondrial membrane with NADH-ubiquinone oxidoreductase (complex I, CI) and ubiquinol-cytochrome c oxidoreductase (cytochrome b-c1 complex, complex III, CIII), resulting in different assemblies (supercomplex SCI(1)III(2)IV(1) and megacomplex MCI(2)III(2)IV(2)).

It is found in the mitochondrion inner membrane. It carries out the reaction 4 Fe(II)-[cytochrome c] + O2 + 8 H(+)(in) = 4 Fe(III)-[cytochrome c] + 2 H2O + 4 H(+)(out). In terms of biological role, component of the cytochrome c oxidase, the last enzyme in the mitochondrial electron transport chain which drives oxidative phosphorylation. The respiratory chain contains 3 multisubunit complexes succinate dehydrogenase (complex II, CII), ubiquinol-cytochrome c oxidoreductase (cytochrome b-c1 complex, complex III, CIII) and cytochrome c oxidase (complex IV, CIV), that cooperate to transfer electrons derived from NADH and succinate to molecular oxygen, creating an electrochemical gradient over the inner membrane that drives transmembrane transport and the ATP synthase. Cytochrome c oxidase is the component of the respiratory chain that catalyzes the reduction of oxygen to water. Electrons originating from reduced cytochrome c in the intermembrane space (IMS) are transferred via the dinuclear copper A center (CU(A)) of subunit 2 and heme A of subunit 1 to the active site in subunit 1, a binuclear center (BNC) formed by heme A3 and copper B (CU(B)). The BNC reduces molecular oxygen to 2 water molecules using 4 electrons from cytochrome c in the IMS and 4 protons from the mitochondrial matrix. This Pelomedusa subrufa (African side-necked turtle) protein is Cytochrome c oxidase subunit 3 (MT-CO3).